An 82-amino-acid chain; its full sequence is Translational regulator CsrA (82 aa).

It belongs to the CsrA/RsmA family. In terms of assembly, homodimer; the beta-strands of each monomer intercalate to form a hydrophobic core, while the alpha-helices form wings that extend away from the core.

Its subcellular location is the cytoplasm. Functionally, a translational regulator that binds mRNA to regulate translation initiation and/or mRNA stability. Usually binds in the 5'-UTR at or near the Shine-Dalgarno sequence preventing ribosome-binding, thus repressing translation. Its main target seems to be the major flagellin gene, while its function is anatagonized by FliW. This chain is Translational regulator CsrA, found in Geobacillus kaustophilus (strain HTA426).